A 156-amino-acid polypeptide reads, in one-letter code: ATP synthase subunit b 1 (156 aa).

The helical transmembrane segment at 5-27 threads the bilayer; it reads FTLISQAMAFAIFIWFTVRFVWP.

The protein belongs to the ATPase B chain family. In terms of assembly, F-type ATPases have 2 components, F(1) - the catalytic core - and F(0) - the membrane proton channel. F(1) has five subunits: alpha(3), beta(3), gamma(1), delta(1), epsilon(1). F(0) has three main subunits: a(1), b(2) and c(10-14). The alpha and beta chains form an alternating ring which encloses part of the gamma chain. F(1) is attached to F(0) by a central stalk formed by the gamma and epsilon chains, while a peripheral stalk is formed by the delta and b chains.

The protein localises to the cell inner membrane. Functionally, f(1)F(0) ATP synthase produces ATP from ADP in the presence of a proton or sodium gradient. F-type ATPases consist of two structural domains, F(1) containing the extramembraneous catalytic core and F(0) containing the membrane proton channel, linked together by a central stalk and a peripheral stalk. During catalysis, ATP synthesis in the catalytic domain of F(1) is coupled via a rotary mechanism of the central stalk subunits to proton translocation. Component of the F(0) channel, it forms part of the peripheral stalk, linking F(1) to F(0). The polypeptide is ATP synthase subunit b 1 (Nitrosospira multiformis (strain ATCC 25196 / NCIMB 11849 / C 71)).